We begin with the raw amino-acid sequence, 447 residues long: Protein odr-4 homolog (447 aa).

2 helical membrane passes run 82–102 and 425–445; these read MLPG…ELAD and IGVI…FHYF.

This sequence belongs to the ODR-4 family. In terms of tissue distribution, ubiquitously expressed.

It is found in the membrane. May play a role in the trafficking of a subset of G-protein coupled receptors. The chain is Protein odr-4 homolog (Odr4) from Mus musculus (Mouse).